Consider the following 247-residue polypeptide: tRNA pseudouridine synthase A (247 aa).

The active-site Nucleophile is the D52. Y110 provides a ligand contact to substrate.

This sequence belongs to the tRNA pseudouridine synthase TruA family. As to quaternary structure, homodimer.

It carries out the reaction uridine(38/39/40) in tRNA = pseudouridine(38/39/40) in tRNA. Formation of pseudouridine at positions 38, 39 and 40 in the anticodon stem and loop of transfer RNAs. This is tRNA pseudouridine synthase A from Hyphomonas neptunium (strain ATCC 15444).